An 89-amino-acid chain; its full sequence is Small ribosomal subunit protein bS18 (89 aa).

The protein belongs to the bacterial ribosomal protein bS18 family. In terms of assembly, part of the 30S ribosomal subunit. Forms a tight heterodimer with protein bS6.

Its function is as follows. Binds as a heterodimer with protein bS6 to the central domain of the 16S rRNA, where it helps stabilize the platform of the 30S subunit. The protein is Small ribosomal subunit protein bS18 of Treponema denticola (strain ATCC 35405 / DSM 14222 / CIP 103919 / JCM 8153 / KCTC 15104).